Consider the following 189-residue polypeptide: Threonylcarbamoyl-AMP synthase (189 aa).

The region spanning 7 to 189 (NPRVNYAANM…LLTGQVVRPS (183 aa)) is the YrdC-like domain.

Belongs to the SUA5 family. TsaC subfamily.

Its subcellular location is the cytoplasm. It catalyses the reaction L-threonine + hydrogencarbonate + ATP = L-threonylcarbamoyladenylate + diphosphate + H2O. In terms of biological role, required for the formation of a threonylcarbamoyl group on adenosine at position 37 (t(6)A37) in tRNAs that read codons beginning with adenine. Catalyzes the conversion of L-threonine, HCO(3)(-)/CO(2) and ATP to give threonylcarbamoyl-AMP (TC-AMP) as the acyladenylate intermediate, with the release of diphosphate. The sequence is that of Threonylcarbamoyl-AMP synthase from Cellvibrio japonicus (strain Ueda107) (Pseudomonas fluorescens subsp. cellulosa).